A 545-amino-acid polypeptide reads, in one-letter code: Hyaluronidase PH-20 (545 aa).

A signal peptide spans 1–35; it reads MGVLKFKHIFFGSAVELSGVFQIVFIFLLIPCCLT. 2 cysteine pairs are disulfide-bonded: cysteine 60/cysteine 355 and cysteine 224/cysteine 239. The N-linked (GlcNAc...) asparagine glycan is linked to asparagine 82. Glutamate 148 (proton donor) is an active-site residue. A glycan (N-linked (GlcNAc...) asparagine) is linked at asparagine 180. Asparagine 372 carries an N-linked (GlcNAc...) asparagine glycan. Cystine bridges form between cysteine 380/cysteine 391, cysteine 385/cysteine 439, and cysteine 441/cysteine 468.

The protein belongs to the glycosyl hydrolase 56 family. Testis.

The protein localises to the cell membrane. It carries out the reaction Random hydrolysis of (1-&gt;4)-linkages between N-acetyl-beta-D-glucosamine and D-glucuronate residues in hyaluronate.. Its function is as follows. Involved in sperm-egg adhesion. Upon fertilization sperm must first penetrate a layer of cumulus cells that surrounds the egg before reaching the zona pellucida. The cumulus cells are embedded in a matrix containing hyaluronic acid which is formed prior to ovulation. This protein aids in penetrating the layer of cumulus cells by digesting hyaluronic acid. This Oryctolagus cuniculus (Rabbit) protein is Hyaluronidase PH-20 (SPAM1).